The primary structure comprises 146 residues: D-aminoacyl-tRNA deacylase (146 aa).

A Gly-cisPro motif, important for rejection of L-amino acids motif is present at residues 138–139 (GP).

Belongs to the DTD family. In terms of assembly, homodimer.

It is found in the cytoplasm. It catalyses the reaction glycyl-tRNA(Ala) + H2O = tRNA(Ala) + glycine + H(+). The catalysed reaction is a D-aminoacyl-tRNA + H2O = a tRNA + a D-alpha-amino acid + H(+). An aminoacyl-tRNA editing enzyme that deacylates mischarged D-aminoacyl-tRNAs. Also deacylates mischarged glycyl-tRNA(Ala), protecting cells against glycine mischarging by AlaRS. Acts via tRNA-based rather than protein-based catalysis; rejects L-amino acids rather than detecting D-amino acids in the active site. By recycling D-aminoacyl-tRNA to D-amino acids and free tRNA molecules, this enzyme counteracts the toxicity associated with the formation of D-aminoacyl-tRNA entities in vivo and helps enforce protein L-homochirality. The protein is D-aminoacyl-tRNA deacylase of Xanthomonas euvesicatoria pv. vesicatoria (strain 85-10) (Xanthomonas campestris pv. vesicatoria).